We begin with the raw amino-acid sequence, 1470 residues long: Membrane-associated guanylate kinase, WW and PDZ domain-containing protein 3 (1470 aa).

Residues 18 to 108 (CAVSWAGPPG…PIRLKTVKPG (91 aa)) form the PDZ 1 domain. Residues 18–108 (CAVSWAGPPG…PIRLKTVKPG (91 aa)) form an interaction with ADRB1 and TGFA region. The 175-residue stretch at 116–290 (RHYLSLQFQK…RSMDFRNYMM (175 aa)) folds into the Guanylate kinase-like domain. 123-130 (FQKGSIDH) is a binding site for ATP. A disordered region spans residues 184–266 (TYDGNFYGTP…ETREMHSESS (83 aa)). A compositionally biased stretch (pro residues) spans 193–204 (PKPPAEPSPFQP). The residue at position 236 (Ser-236) is a Phosphoserine. Positions 238 to 247 (LPEEEEDEDK) are enriched in acidic residues. WW domains lie at 296 to 329 (EPLP…DPRL) and 342 to 375 (GELP…NPVE). A PDZ 2 domain is found at 413–495 (RASLKKSTMG…NQYVNLTLCR (83 aa)). The tract at residues 413–495 (RASLKKSTMG…NQYVNLTLCR (83 aa)) is interaction with PTEN. The interval 550–575 (LLSSDRLNGPSDSNEQRASLASSGSS) is disordered. A compositionally biased stretch (polar residues) spans 559-575 (PSDSNEQRASLASSGSS). The 77-residue stretch at 581 to 657 (TIPLVKGPKG…GADVPLLILR (77 aa)) folds into the PDZ 3 domain. A Phosphoserine modification is found at Ser-598. Residues 665 to 700 (KTAKMKTDTKETSGSLETINEPTPQPMPFPPSIIRS) form a disordered region. Polar residues predominate over residues 676–686 (TSGSLETINEP). Ser-702 is modified (phosphoserine). Residues 729-811 (DVFLRKQESG…NGHVLLTVRR (83 aa)) form the PDZ 4 domain. The tract at residues 729–811 (DVFLRKQESG…NGHVLLTVRR (83 aa)) is interaction with ADGRB1. Positions 818–847 (KQPEDESPQAFSQSGSPRLNRTELPTRSAP) are disordered. Over residues 826–847 (QAFSQSGSPRLNRTELPTRSAP) the composition is skewed to polar residues. 2 positions are modified to phosphoserine: Ser-833 and Ser-916. In terms of domain architecture, PDZ 5 spans 852–939 (DVILQRKENE…TVTLTVVAEE (88 aa)). An interaction with LPAR2 and GRIN2B region spans residues 852-939 (DVILQRKENE…TVTLTVVAEE (88 aa)). A disordered region spans residues 939-976 (EEHHGPPSGTNSARQSPALQHRPMGQAQATHIPGDRTA). A compositionally biased stretch (polar residues) spans 946–956 (SGTNSARQSPA). The PDZ 6 domain occupies 1022–1104 (PVELERGPRG…KVLLLLRPGT (83 aa)). Disordered regions lie at residues 1124–1146 (IYDE…ESHV) and 1167–1470 (DTVQ…DKQL). Polar residues predominate over residues 1175–1191 (TLNGSQPEMKYQSIQKN). Composition is skewed to basic and acidic residues over residues 1193-1209 (SKKD…KNLL) and 1230-1263 (RHSE…KGEN). The segment covering 1285–1304 (SSSPRKQQKIGGNSLSNTEG) has biased composition (polar residues). Residue Ser-1321 is modified to Phosphoserine. 4 stretches are compositionally biased toward basic and acidic residues: residues 1326–1340 (PEGK…KDLK), 1350–1361 (RSPEKRSSKVDE), 1377–1397 (VSEK…DKTG), and 1422–1431 (EVTDRGKERA).

It belongs to the MAGUK family. Interacts with ADRB1, ADGRB1, LPAR2/EDG4, FZD4, FZD7, GRIN2B, TGFA and VANGL2. Interacts with PTEN. Interacts with ADRB1, PTPRB and unidentified tyrosine phosphorylated proteins. Interacts with DLL1. Interacts with PRRG4 (via cytoplasmic domain).

The protein resides in the cell membrane. Its subcellular location is the cell junction. The protein localises to the tight junction. It localises to the nucleus. In terms of biological role, acts as a scaffolding protein at cell-cell junctions, thereby regulating various cellular and signaling processes. Cooperates with PTEN to modulate the kinase activity of AKT1. Its interaction with PTPRB and tyrosine phosphorylated proteins suggests that it may link receptor tyrosine phosphatase with its substrates at the plasma membrane. In polarized epithelial cells, involved in efficient trafficking of TGFA to the cell surface. Regulates the ability of LPAR2 to activate ERK and RhoA pathways. Regulates the JNK signaling cascade via its interaction with FZD4 and VANGL2. This Rattus norvegicus (Rat) protein is Membrane-associated guanylate kinase, WW and PDZ domain-containing protein 3 (Magi3).